Consider the following 333-residue polypeptide: Glycogenin-1 (333 aa).

Thr-2 carries the N-acetylthreonine modification. Residues Leu-9, Thr-11, Asn-12, and Tyr-15 each coordinate UDP. Positions 9, 11, 12, and 15 each coordinate UDP-alpha-D-glucose. Phosphoserine is present on Ser-44. Arg-77 is a binding site for UDP. 10 residues coordinate UDP-alpha-D-glucose: Arg-77, Lys-86, Asp-102, Ala-103, Asp-104, Asn-133, Ser-134, Asp-160, Asp-163, and Gln-164. The UDP site is built by Asp-102, Ala-103, and Asp-104. Asp-102 is a Mn(2+) binding site. A Mn(2+)-binding site is contributed by Asp-104. Tyr-195 carries an O-linked (Glc...) tyrosine glycan. Residues His-212, Gly-215, and Lys-218 each contribute to the UDP site. His-212 is a binding site for Mn(2+). Residues Gly-215 and Lys-218 each coordinate UDP-alpha-D-glucose. The tract at residues 284–316 (SDLSFGEAPAAPQPSMSSEERKERWEQGQADYM) is interaction with GYS1. The disordered stretch occupies residues 290–316 (EAPAAPQPSMSSEERKERWEQGQADYM).

This sequence belongs to the glycosyltransferase 8 family. Glycogenin subfamily. Part of the GYS1-GYG1 complex, a heterooctamer composed of a tetramer of GYS1 and 2 dimers of GYG1, where each GYS1 protomer binds to one GYG1 subunit (via GYG1 C-terminus); the GYS1 tetramer may dissociate from GYG1 dimers to continue glycogen polymerization on its own. May also form a heterooctamer complex with GYS2. It depends on Mn(2+) as a cofactor. In terms of processing, self-glycosylated by the transfer of glucose residues from UDP-glucose to itself, forming an alpha-1,4-glycan of around 10 residues attached to Tyr-195. Post-translationally, phosphorylated. As to expression, skeletal muscle, heart, to a lesser extent in kidney, lung and brain.

The protein resides in the cytoplasm. It is found in the nucleus. The enzyme catalyses L-tyrosyl-[glycogenin] + UDP-alpha-D-glucose = alpha-D-glucosyl-L-tyrosyl-[glycogenin] + UDP + H(+). It carries out the reaction [1,4-alpha-D-glucosyl](n)-L-tyrosyl-[glycogenin] + UDP-alpha-D-glucose = [1,4-alpha-D-glucosyl](n+1)-L-tyrosyl-[glycogenin] + UDP + H(+). The protein operates within glycan biosynthesis; glycogen biosynthesis. Its function is as follows. Glycogenin participates in the glycogen biosynthetic process along with glycogen synthase and glycogen branching enzyme. It catalyzes the formation of a short alpha (1,4)-glucosyl chain covalently attached via a glucose 1-O-tyrosyl linkage to internal tyrosine residues and these chains act as primers for the elongation reaction catalyzed by glycogen synthase. The chain is Glycogenin-1 from Mus musculus (Mouse).